A 389-amino-acid polypeptide reads, in one-letter code: Cytochrome b (389 aa).

The next 4 membrane-spanning stretches (helical) occupy residues 32-52, 76-98, 113-133, and 179-199; these read FGSL…FLAM, WIVR…AHIG, LWSI…LGYV, and FFSL…AHFM. Residues H82 and H96 each coordinate heme b. Heme b contacts are provided by H183 and H197. An a ubiquinone-binding site is contributed by H202. 4 consecutive transmembrane segments (helical) span residues 225-245, 289-309, 321-341, and 348-368; these read FIFK…VIVF, LLGV…PLTD, AMKF…WLGS, and YLEI…VIVP.

It belongs to the cytochrome b family. Fungal cytochrome b-c1 complex contains 10 subunits; 3 respiratory subunits, 2 core proteins and 5 low-molecular weight proteins. Cytochrome b-c1 complex is a homodimer. Heme b serves as cofactor.

The protein resides in the mitochondrion inner membrane. Functionally, component of the ubiquinol-cytochrome c reductase complex (complex III or cytochrome b-c1 complex) that is part of the mitochondrial respiratory chain. The b-c1 complex mediates electron transfer from ubiquinol to cytochrome c. Contributes to the generation of a proton gradient across the mitochondrial membrane that is then used for ATP synthesis. In Strobilurus tenacellus, this protein is Cytochrome b (COB).